Consider the following 423-residue polypeptide: MAEIPDETIQQFMALTNVSHNIAVQYLSEFGDLNEALNSYYASQTDDQKDRREEAHWNRQQEKALKQEAFSTNSSNKAINTEHVGGLCPKPGSSQGSNEYLKRKGSTSPEPTKGSSRSGSGNNSRFMSFSDMVRGQADDDDEDQPRNTFAGGETSGLEVTDPSDPNSLLKDLLEKARRGGQMGAENGFRDDEDHEMGANRFTGRGFRLGSTIDAADEVVEDNTSQSQRRPEKVTREITFWKEGFQVADGPLYRYDDPANSFYLSELNQGRAPLKLLDVQFGQEVEVNVYKKLDESYKAPTRKLGGFSGQGQRLGSPIPGESSPAEVPKNETPAAQEQPMPDNEPKQGDTSIQIRYANGKREVLHCNSTDTVKFLYEHVTSNANTDPSRNFTLNYAFPIKPISNDETTLKDADLLNSVVVQRWA.

Residues 44–167 (QTDDQKDRRE…EVTDPSDPNS (124 aa)) are disordered. Basic and acidic residues predominate over residues 46-66 (DDQKDRREEAHWNRQQEKALK). Residues 69 to 79 (AFSTNSSNKAI) show a composition bias toward polar residues. Positions 115–130 (SSRSGSGNNSRFMSFS) are enriched in low complexity. 3 positions are modified to phosphoserine: S128, S210, and S224. The SEP domain occupies 232–297 (KVTREITFWK…VYKKLDESYK (66 aa)). K241 is covalently cross-linked (Glycyl lysine isopeptide (Lys-Gly) (interchain with G-Cter in ubiquitin)). The segment at 299–348 (PTRKLGGFSGQGQRLGSPIPGESSPAEVPKNETPAAQEQPMPDNEPKQGD) is disordered. Phosphoserine occurs at positions 315, 321, and 322. T331 bears the Phosphothreonine mark. In terms of domain architecture, UBX spans 344-421 (PKQGDTSIQI…DLLNSVVVQR (78 aa)).

As to quaternary structure, forms a complex composed of CDC48, NPL4, UFD1, DOA1, SHP1 and deubiquitinase OTU1. Interacts with CDC48.

It is found in the nucleus. It localises to the cytoplasm. Functionally, involved in CDC48-dependent protein degradation through the ubiquitin/proteasome pathway. Direct or indirect positive regulator of GLC7 activity. In Saccharomyces cerevisiae (strain ATCC 204508 / S288c) (Baker's yeast), this protein is UBX domain-containing protein 1 (SHP1).